We begin with the raw amino-acid sequence, 401 residues long: Nicotinate phosphoribosyltransferase (401 aa).

His-221 carries the phosphohistidine; by autocatalysis modification.

Belongs to the NAPRTase family. Transiently phosphorylated on a His residue during the reaction cycle. Phosphorylation strongly increases the affinity for substrates and increases the rate of nicotinate D-ribonucleotide production. Dephosphorylation regenerates the low-affinity form of the enzyme, leading to product release.

It catalyses the reaction nicotinate + 5-phospho-alpha-D-ribose 1-diphosphate + ATP + H2O = nicotinate beta-D-ribonucleotide + ADP + phosphate + diphosphate. It functions in the pathway cofactor biosynthesis; NAD(+) biosynthesis; nicotinate D-ribonucleotide from nicotinate: step 1/1. Its function is as follows. Catalyzes the synthesis of beta-nicotinate D-ribonucleotide from nicotinate and 5-phospho-D-ribose 1-phosphate at the expense of ATP. The polypeptide is Nicotinate phosphoribosyltransferase (Serratia proteamaculans (strain 568)).